Consider the following 316-residue polypeptide: Retinol dehydrogenase 7 (316 aa).

33–57 (FITGCDSGFGNLLARQLDRRGMRVL) is a binding site for NADP(+). S163 lines the substrate pocket. Y175 acts as the Proton acceptor in catalysis.

It belongs to the short-chain dehydrogenases/reductases (SDR) family. As to expression, highly expressed in liver. Also expressed in lung, eye, kidney, and brain.

It localises to the microsome. The protein resides in the endoplasmic reticulum. It catalyses the reaction all-trans-retinol--[retinol-binding protein] + NAD(+) = all-trans-retinal--[retinol-binding protein] + NADH + H(+). It functions in the pathway cofactor metabolism; retinol metabolism. Functionally, acts on androgens and retinols, i.e. has steroid 3-alpha- and 17-beta-dehydrogenase and cis/trans-retinol catalytic activities. This chain is Retinol dehydrogenase 7 (Rdh7), found in Mus musculus (Mouse).